A 748-amino-acid chain; its full sequence is Polyribonucleotide nucleotidyltransferase (748 aa).

Positions 487 and 493 each coordinate Mg(2+). Positions 554–613 constitute a KH domain; the sequence is PSTTTIKIDKDKIRDIIGPGGKVIKEICETSGAKIDISDDGTVSVYASDRDKLKVALDKI. Residues 623–691 form the S1 motif domain; sequence GEIFNGTVVK…NKGKAKLTIK (69 aa). Residues 691-748 form a disordered region; sequence KNADKDKSSNNTKPKTNVNNTKDNSEPEQRRDSSKKRAWNEDNNAETAEVITERKYFN. The segment covering 699–712 has biased composition (low complexity); that stretch reads SNNTKPKTNVNNTK. Basic and acidic residues predominate over residues 713 to 722; the sequence is DNSEPEQRRD.

This sequence belongs to the polyribonucleotide nucleotidyltransferase family. Mg(2+) is required as a cofactor.

Its subcellular location is the cytoplasm. It catalyses the reaction RNA(n+1) + phosphate = RNA(n) + a ribonucleoside 5'-diphosphate. Its function is as follows. Involved in mRNA degradation. Catalyzes the phosphorolysis of single-stranded polyribonucleotides processively in the 3'- to 5'-direction. The sequence is that of Polyribonucleotide nucleotidyltransferase from Rickettsia africae (strain ESF-5).